Here is a 361-residue protein sequence, read N- to C-terminus: Peptide chain release factor 1 (361 aa).

Gln-238 is modified (N5-methylglutamine).

Belongs to the prokaryotic/mitochondrial release factor family. Post-translationally, methylated by PrmC. Methylation increases the termination efficiency of RF1.

It is found in the cytoplasm. Peptide chain release factor 1 directs the termination of translation in response to the peptide chain termination codons UAG and UAA. This is Peptide chain release factor 1 from Mesomycoplasma hyopneumoniae (strain 232) (Mycoplasma hyopneumoniae).